Consider the following 238-residue polypeptide: Flagellar L-ring protein (238 aa).

The first 16 residues, 1-16 (MNKAILAVAMVLLLAG), serve as a signal peptide directing secretion. C17 is lipidated: N-palmitoyl cysteine. Residue C17 is the site of S-diacylglycerol cysteine attachment.

This sequence belongs to the FlgH family. As to quaternary structure, the basal body constitutes a major portion of the flagellar organelle and consists of four rings (L,P,S, and M) mounted on a central rod.

The protein resides in the cell outer membrane. It is found in the bacterial flagellum basal body. Its function is as follows. Assembles around the rod to form the L-ring and probably protects the motor/basal body from shearing forces during rotation. The chain is Flagellar L-ring protein from Brucella canis (strain ATCC 23365 / NCTC 10854 / RM-666).